The sequence spans 266 residues: Putative carbamate hydrolase RutD (266 aa).

Belongs to the AB hydrolase superfamily. Hydrolase RutD family.

It catalyses the reaction carbamate + 2 H(+) = NH4(+) + CO2. Its function is as follows. Involved in pyrimidine catabolism. May facilitate the hydrolysis of carbamate, a reaction that can also occur spontaneously. The chain is Putative carbamate hydrolase RutD from Escherichia coli O150:H5 (strain SE15).